The primary structure comprises 1032 residues: Contactin-1a (1032 aa).

The signal sequence occupies residues 1–31 (MIPEAFQPRAMKHTTTVLMLALSSRFWSVCA). Ig-like C2-type domains lie at 46–139 (PVFE…ARVQ), 144–231 (DMFS…KSVF), 249–335 (PADI…THLY), 340–417 (PDWL…AELR), 423–510 (PSFQ…GSLS), and 515–612 (TKIT…AELV). 2 disulfide bridges follow: Cys-70/Cys-122 and Cys-166/Cys-219. Asn-119, Asn-216, and Asn-266 each carry an N-linked (GlcNAc...) asparagine glycan. 3 cysteine pairs are disulfide-bonded: Cys-271–Cys-319, Cys-361–Cys-401, and Cys-446–Cys-494. Residues Asn-455, Asn-467, Asn-483, and Asn-504 are each glycosylated (N-linked (GlcNAc...) asparagine). Cys-536 and Cys-596 are joined by a disulfide. Asn-604 is a glycosylation site (N-linked (GlcNAc...) asparagine). 4 consecutive Fibronectin type-III domains span residues 619–718 (PPGG…TREA), 723–820 (APSD…SAQD), 825–918 (APII…TKKS), and 920–1015 (PSRP…APAP). A disordered region spans residues 699–729 (NTLGTGPPSEPSPKTTTREARPIVAPSDIGG). N-linked (GlcNAc...) asparagine glycosylation occurs at Asn-879. Positions 907–926 (ASQRNRIYTKKSPPSRPPKI) are disordered. An N-linked (GlcNAc...) asparagine glycan is attached at Asn-950. The GPI-anchor amidated glycine moiety is linked to residue Gly-1010. The propeptide at 1011 to 1032 (SAPAPALASALLLLPLLWTLML) is removed in mature form.

The protein belongs to the immunoglobulin superfamily. Contactin family. In terms of tissue distribution, expressed in brain.

It is found in the cell membrane. Its function is as follows. Mediates cell surface interactions during nervous system development. The polypeptide is Contactin-1a (cntn1a) (Danio rerio (Zebrafish)).